Consider the following 451-residue polypeptide: tRNA-2-methylthio-N(6)-dimethylallyladenosine synthase (451 aa).

The region spanning 6–122 (RRYHIITFGC…LDQLLEQVWA (117 aa)) is the MTTase N-terminal domain. The [4Fe-4S] cluster site is built by Cys-15, Cys-51, Cys-85, Cys-157, Cys-161, and Cys-164. A Radical SAM core domain is found at 143–384 (RESTVSAWVN…STQAMERSQR (242 aa)). A TRAM domain is found at 383–447 (QRYLGRVEEV…AFSLTGEALS (65 aa)).

It belongs to the methylthiotransferase family. MiaB subfamily. As to quaternary structure, monomer. Requires [4Fe-4S] cluster as cofactor.

Its subcellular location is the cytoplasm. It carries out the reaction N(6)-dimethylallyladenosine(37) in tRNA + (sulfur carrier)-SH + AH2 + 2 S-adenosyl-L-methionine = 2-methylsulfanyl-N(6)-dimethylallyladenosine(37) in tRNA + (sulfur carrier)-H + 5'-deoxyadenosine + L-methionine + A + S-adenosyl-L-homocysteine + 2 H(+). Functionally, catalyzes the methylthiolation of N6-(dimethylallyl)adenosine (i(6)A), leading to the formation of 2-methylthio-N6-(dimethylallyl)adenosine (ms(2)i(6)A) at position 37 in tRNAs that read codons beginning with uridine. The sequence is that of tRNA-2-methylthio-N(6)-dimethylallyladenosine synthase from Synechocystis sp. (strain ATCC 27184 / PCC 6803 / Kazusa).